Reading from the N-terminus, the 382-residue chain is Galactokinase (382 aa).

Residue glutamate 34 to aspartate 37 participates in substrate binding. An ATP-binding site is contributed by glycine 124–serine 130. Mg(2+) is bound by residues serine 130 and glutamate 162. Aspartate 174 serves as the catalytic Proton acceptor. Tyrosine 223 contributes to the substrate binding site.

This sequence belongs to the GHMP kinase family. GalK subfamily.

It localises to the cytoplasm. The enzyme catalyses alpha-D-galactose + ATP = alpha-D-galactose 1-phosphate + ADP + H(+). Its pathway is carbohydrate metabolism; galactose metabolism. Functionally, catalyzes the transfer of the gamma-phosphate of ATP to D-galactose to form alpha-D-galactose-1-phosphate (Gal-1-P). The chain is Galactokinase from Salmonella paratyphi A (strain ATCC 9150 / SARB42).